The following is a 295-amino-acid chain: 3-hydroxy-5-phosphonooxypentane-2,4-dione thiolase (295 aa).

The active-site Schiff-base intermediate with substrate is the lysine 203.

The protein belongs to the DeoC/FbaB aldolase family. In terms of assembly, homodecamer.

It localises to the cytoplasm. It carries out the reaction dihydroxyacetone phosphate + acetyl-CoA = 3-hydroxy-2,4-dioxopentyl phosphate + CoA. In terms of biological role, involved in the degradation of phospho-AI-2, thereby terminating induction of the lsr operon and closing the AI-2 signaling cycle. Catalyzes the transfer of an acetyl moiety from 3-hydroxy-5-phosphonooxypentane-2,4-dione to CoA to form glycerone phosphate and acetyl-CoA. This is 3-hydroxy-5-phosphonooxypentane-2,4-dione thiolase from Klebsiella pneumoniae subsp. pneumoniae (strain ATCC 700721 / MGH 78578).